The chain runs to 740 residues: Ethylene receptor 1 (740 aa).

Helical transmembrane passes span I23–V43, W53–L73, and A95–V115. C65 and H69 together coordinate Cu cation. One can recognise a GAF domain in the interval D158–L307. One can recognise a Histidine kinase domain in the interval V350–I587. Phosphohistidine; by autocatalysis is present on H353. A Response regulatory domain is found at K615–L732. D663 carries the 4-aspartylphosphate modification.

Belongs to the ethylene receptor family. In terms of assembly, homodimer; disulfide-linked. Cu cation is required as a cofactor. Activation probably requires a transfer of a phosphate group between a His in the transmitter domain and an Asp of the receiver domain.

The protein localises to the endoplasmic reticulum membrane. It carries out the reaction ATP + protein L-histidine = ADP + protein N-phospho-L-histidine.. Functionally, may act early in the ethylene signal transduction pathway, possibly as an ethylene receptor, or as a regulator of the pathway. In Pelargonium hortorum (Common geranium), this protein is Ethylene receptor 1 (ETR1).